Consider the following 307-residue polypeptide: GTPase Era (307 aa).

The Era-type G domain maps to 7 to 181 (RCGWVALLGP…VKLVKSKLPV (175 aa)). The interval 15–22 (GPPNAGKS) is G1. 15–22 (GPPNAGKS) lines the GTP pocket. Residues 41–45 (QTTRN) are G2. Positions 62–65 (DTPG) are G3. GTP contacts are provided by residues 62–66 (DTPGI) and 130–133 (NKVD). The tract at residues 130–133 (NKVD) is G4. The tract at residues 160 to 162 (VSA) is G5. Residues 212–290 (LRQELPYSVA…HLELWVKVRE (79 aa)) enclose the KH type-2 domain.

Belongs to the TRAFAC class TrmE-Era-EngA-EngB-Septin-like GTPase superfamily. Era GTPase family. As to quaternary structure, monomer.

Its subcellular location is the cytoplasm. It is found in the cell inner membrane. Its function is as follows. An essential GTPase that binds both GDP and GTP, with rapid nucleotide exchange. Plays a role in 16S rRNA processing and 30S ribosomal subunit biogenesis and possibly also in cell cycle regulation and energy metabolism. In Nitratidesulfovibrio vulgaris (strain DSM 19637 / Miyazaki F) (Desulfovibrio vulgaris), this protein is GTPase Era.